A 267-amino-acid chain; its full sequence is Sulfate transporter CysZ (267 aa).

The next 4 helical transmembrane spans lie at 29–49 (FVIMPILLNIVLLSGLFWLFI), 73–93 (ILLIFAILMILVLFYFVFTTL), 149–169 (IILFLLGFVPVLGQSVIPIIV), and 212–232 (GLVMLCTFIPLVNLVVIPVAV).

This sequence belongs to the CysZ family.

It is found in the cell inner membrane. Its function is as follows. High affinity, high specificity proton-dependent sulfate transporter, which mediates sulfate uptake. Provides the sulfur source for the cysteine synthesis pathway. The sequence is that of Sulfate transporter CysZ from Pasteurella multocida (strain Pm70).